The sequence spans 461 residues: Cysteine--tRNA ligase (461 aa).

Cys28 contributes to the Zn(2+) binding site. The 'HIGH' region signature appears at 30–40; that stretch reads ITVYDLCHIGH. Zn(2+)-binding residues include Cys209, His234, and Glu238. A 'KMSKS' region motif is present at residues 266–270; the sequence is KMSKS. Lys269 is an ATP binding site.

This sequence belongs to the class-I aminoacyl-tRNA synthetase family. Monomer. Zn(2+) is required as a cofactor.

It localises to the cytoplasm. It catalyses the reaction tRNA(Cys) + L-cysteine + ATP = L-cysteinyl-tRNA(Cys) + AMP + diphosphate. In Shigella flexneri, this protein is Cysteine--tRNA ligase.